The chain runs to 240 residues: Competence protein ComFC (240 aa).

It belongs to the ComF/GntX family. As to quaternary structure, monomer and dimer in solution. Interacts with ComFA and DprA; ComFA-ComFC form rings about 150 Angstroms in diameter with apparent 6-fold symmetry.

Functionally, involved in transformation (genetic competence for DNA uptake). The protein is Competence protein ComFC (comFC) of Bacillus subtilis (strain 168).